Here is a 215-residue protein sequence, read N- to C-terminus: ATP-dependent dethiobiotin synthetase BioD (215 aa).

13 to 18 (DIGKTV) serves as a coordination point for ATP. Thr-17 is a Mg(2+) binding site. Lys-38 is an active-site residue. Position 42 (Thr-42) interacts with substrate. Residues Asp-50, 115–118 (EGAG), and 175–176 (NH) each bind ATP. Asp-50 and Glu-115 together coordinate Mg(2+).

It belongs to the dethiobiotin synthetase family. Homodimer. It depends on Mg(2+) as a cofactor.

It is found in the cytoplasm. The catalysed reaction is (7R,8S)-7,8-diammoniononanoate + CO2 + ATP = (4R,5S)-dethiobiotin + ADP + phosphate + 3 H(+). It functions in the pathway cofactor biosynthesis; biotin biosynthesis; biotin from 7,8-diaminononanoate: step 1/2. Functionally, catalyzes a mechanistically unusual reaction, the ATP-dependent insertion of CO2 between the N7 and N8 nitrogen atoms of 7,8-diaminopelargonic acid (DAPA, also called 7,8-diammoniononanoate) to form a ureido ring. The protein is ATP-dependent dethiobiotin synthetase BioD of Neisseria meningitidis serogroup B (strain ATCC BAA-335 / MC58).